The chain runs to 595 residues: Peptidyl-prolyl cis-trans isomerase CYP65 (595 aa).

The region spanning 35–108 (KSLPYYCCAL…GEYHCPVLNK (74 aa)) is the U-box domain. The PPIase cyclophilin-type domain occupies 342–496 (KKGYVQFQTT…EEIKIIEASV (155 aa)). Disordered regions lie at residues 503-546 (ELDE…GGGG) and 576-595 (SKKR…FSSW). Basic and acidic residues predominate over residues 510–525 (KEKAEKEKNEDKDIEK). A compositionally biased stretch (polar residues) spans 582–595 (TASASTGFKDFSSW).

It belongs to the cyclophilin-type PPIase family. PPIL2 subfamily. Expressed in leaves, flower buds and stems. Lower levels of expression in roots.

The protein resides in the nucleus. The enzyme catalyses [protein]-peptidylproline (omega=180) = [protein]-peptidylproline (omega=0). It carries out the reaction S-ubiquitinyl-[E2 ubiquitin-conjugating enzyme]-L-cysteine + [acceptor protein]-L-lysine = [E2 ubiquitin-conjugating enzyme]-L-cysteine + N(6)-ubiquitinyl-[acceptor protein]-L-lysine.. It participates in protein modification; protein ubiquitination. In terms of biological role, may catalyze the cis-trans isomerization of proline imidic peptide bonds in oligopeptides thereby assisting the folding of proteins. May also function as a chaperone, playing a role in intracellular transport of proteins. May also have a protein ubiquitin ligase activity acting as an E3 ubiquitin protein ligase or as a ubiquitin-ubiquitin ligase promoting elongation of ubiquitin chains on proteins. This chain is Peptidyl-prolyl cis-trans isomerase CYP65 (CYP65), found in Arabidopsis thaliana (Mouse-ear cress).